The following is a 120-amino-acid chain: Dynein 11 kDa light chain, flagellar outer arm (120 aa).

This sequence belongs to the dynein light chain family. In terms of assembly, consists of at least 3 heavy chains (alpha, beta and gamma), 2 intermediate chains and 8 light chains.

Its subcellular location is the cytoplasm. The protein localises to the cytoskeleton. It localises to the flagellum axoneme. The sequence is that of Dynein 11 kDa light chain, flagellar outer arm from Chlamydomonas reinhardtii (Chlamydomonas smithii).